The sequence spans 193 residues: Peptidyl-tRNA hydrolase (193 aa).

Residue Tyr18 coordinates tRNA. Residue His23 is the Proton acceptor of the active site. TRNA contacts are provided by Phe69, Asn71, and Asn117.

The protein belongs to the PTH family. In terms of assembly, monomer.

It is found in the cytoplasm. The enzyme catalyses an N-acyl-L-alpha-aminoacyl-tRNA + H2O = an N-acyl-L-amino acid + a tRNA + H(+). Hydrolyzes ribosome-free peptidyl-tRNAs (with 1 or more amino acids incorporated), which drop off the ribosome during protein synthesis, or as a result of ribosome stalling. In terms of biological role, catalyzes the release of premature peptidyl moieties from peptidyl-tRNA molecules trapped in stalled 50S ribosomal subunits, and thus maintains levels of free tRNAs and 50S ribosomes. This Teredinibacter turnerae (strain ATCC 39867 / T7901) protein is Peptidyl-tRNA hydrolase.